Here is a 483-residue protein sequence, read N- to C-terminus: ATP synthase subunit beta (483 aa).

168–175 contacts ATP; that stretch reads GGAGVGKT.

It belongs to the ATPase alpha/beta chains family. F-type ATPases have 2 components, CF(1) - the catalytic core - and CF(0) - the membrane proton channel. CF(1) has five subunits: alpha(3), beta(3), gamma(1), delta(1), epsilon(1). CF(0) has three main subunits: a(1), b(2) and c(9-12). The alpha and beta chains form an alternating ring which encloses part of the gamma chain. CF(1) is attached to CF(0) by a central stalk formed by the gamma and epsilon chains, while a peripheral stalk is formed by the delta and b chains.

The protein localises to the cell membrane. It carries out the reaction ATP + H2O + 4 H(+)(in) = ADP + phosphate + 5 H(+)(out). Functionally, produces ATP from ADP in the presence of a proton gradient across the membrane. The catalytic sites are hosted primarily by the beta subunits. The sequence is that of ATP synthase subunit beta from Mycobacterium ulcerans (strain Agy99).